Here is a 469-residue protein sequence, read N- to C-terminus: Cyclin-dependent kinase 14 (469 aa).

Phosphoserine occurs at positions 24, 78, and 95. The tract at residues 103 to 133 is disordered; that stretch reads FKSSSAGKESPKVRRHSSPSSPTSPKFGKAD. Serine 134 is subject to Phosphoserine. The region spanning 135 to 419 is the Protein kinase domain; the sequence is YEKLEKLGEG…AQAALSHEYF (285 aa). Residues 141–149 and lysine 164 each bind ATP; that span reads LGEGSYATV. Catalysis depends on aspartate 256, which acts as the Proton acceptor. The interval 449–469 is disordered; it reads ESMRAFGKNNSYGKSLSNSKH. Polar residues predominate over residues 456-469; that stretch reads KNNSYGKSLSNSKH.

It belongs to the protein kinase superfamily. CMGC Ser/Thr protein kinase family. CDC2/CDKX subfamily. As to quaternary structure, found in a complex with LRP6, CCNY and CAPRIN2 during G2/M stage; CAPRIN2 functions as a scaffold for the complex by binding to CCNY via its N terminus and to CDK14 via its C terminus. Interacts with CCNY; CCNY mediates its recruitment to the plasma membrane and promotes phosphorylation of LRP6. Interacts with CCDN3 and CDKN1A. Interacts with SEPT8. Interacts with 14-3-3 proteina YWHAB, YWHAE, YWHAH and YWHAQ. In terms of tissue distribution, in the adult, widely expressed at low levels except in brain, kidney and testis where expression is high. In the brain, detected in cortex, hippocampus, dentate gyrus, amygdala cortex, parasubiculum and cerebellum. In the embryo, expressed predominantly in the nervous system.

The protein localises to the cell membrane. Its subcellular location is the cytoplasm. The protein resides in the nucleus. The catalysed reaction is L-seryl-[protein] + ATP = O-phospho-L-seryl-[protein] + ADP + H(+). It catalyses the reaction L-threonyl-[protein] + ATP = O-phospho-L-threonyl-[protein] + ADP + H(+). Serine/threonine-protein kinase activity is promoted by associated cyclins CCDN3 and CCNY and repressed by CDKN1A. Its function is as follows. Serine/threonine-protein kinase involved in the control of the eukaryotic cell cycle, whose activity is controlled by an associated cyclin. Acts as a cell-cycle regulator of Wnt signaling pathway during G2/M phase by mediating the phosphorylation of LRP6 at 'Ser-1490', leading to the activation of the Wnt signaling pathway. Acts as a regulator of cell cycle progression and cell proliferation via its interaction with CCDN3. Phosphorylates RB1 in vitro, however the relevance of such result remains to be confirmed in vivo. May also play a role in meiosis, neuron differentiation and may indirectly act as a negative regulator of insulin-responsive glucose transport. The polypeptide is Cyclin-dependent kinase 14 (Cdk14) (Mus musculus (Mouse)).